Here is a 434-residue protein sequence, read N- to C-terminus: Alpha-enolase (434 aa).

The residue at position 2 (Ser-2) is an N-acetylserine. At Lys-5 the chain carries N6-acetyllysine. Ser-27 carries the phosphoserine modification. An epitope recognized by CAR and healthy patient antibodies region spans residues 31 to 38 (FRAAVPSG). Ser-40 contributes to the Mg(2+) binding site. Tyr-44 carries the phosphotyrosine modification. Residues 56–63 (RYMGKGVS) are epitope recognized by CAR antibodies. Position 60 is an N6-acetyllysine; alternate (Lys-60). Lys-60 is modified (N6-succinyllysine; alternate). Residues Lys-64 and Lys-71 each carry the N6-acetyllysine modification. Lys-89 carries the N6-acetyllysine; alternate modification. The residue at position 89 (Lys-89) is an N6-succinyllysine; alternate. N6-acetyllysine occurs at positions 92 and 126. Positions 97-237 (MDGTENKSKF…KTAIGKAGYT (141 aa)) are required for repression of c-myc promoter activity. His-158 and Glu-167 together coordinate substrate. Residues Lys-193 and Lys-199 each carry the N6-acetyllysine modification. Residue Lys-202 is modified to N6-acetyllysine; alternate. Lys-202 is covalently cross-linked (Glycyl lysine isopeptide (Lys-Gly) (interchain with G-Cter in SUMO2); alternate). The Proton donor role is filled by Glu-210. Lys-228 and Lys-233 each carry N6-acetyllysine; alternate. Lys-228 bears the N6-succinyllysine; alternate mark. An N6-(2-hydroxyisobutyryl)lysine; alternate modification is found at Lys-228. The residue at position 233 (Lys-233) is an N6-malonyllysine; alternate. Asp-245 lines the Mg(2+) pocket. Ser-254 is modified (phosphoserine). An N6-acetyllysine modification is found at Lys-256. Phosphoserine is present on residues Ser-263 and Ser-272. N6-acetyllysine; alternate is present on Lys-281. Lys-281 carries the post-translational modification N6-(2-hydroxyisobutyryl)lysine; alternate. Residue Lys-285 is modified to N6-acetyllysine. Position 287 is a phosphotyrosine (Tyr-287). Ser-291 is subject to Phosphoserine. 2 residues coordinate Mg(2+): Glu-293 and Asp-318. Substrate contacts are provided by Glu-293 and Asp-318. An N6-acetyllysine mark is found at Lys-335 and Lys-343. Lys-343 (proton acceptor) is an active-site residue. Substrate-binding positions include 370–373 (SHRS) and Lys-394. Positions 405 to 434 (AKYNQLLRIEEELGSKAKFAGRNFRNPLAK) are required for interaction with PLG. At Lys-406 the chain carries N6-acetyllysine. Position 420 is an N6-acetyllysine; alternate (Lys-420). Lys-420 carries the post-translational modification N6-succinyllysine; alternate. An N6-malonyllysine; alternate modification is found at Lys-420.

This sequence belongs to the enolase family. Mammalian enolase is composed of 3 isozyme subunits, alpha, beta and gamma, which can form homodimers or heterodimers which are cell-type and development-specific. ENO1 interacts with PLG in the neuronal plasma membrane and promotes its activation. The C-terminal lysine is required for this binding. Isoform MBP-1 interacts with TRAPPC2B. Interacts with ENO4 and PGAM2. Interacts with CMTM6. Requires Mg(2+) as cofactor. In terms of processing, ISGylated. Post-translationally, lysine 2-hydroxyisobutyrylation (Khib) by p300/EP300 activates the phosphopyruvate hydratase activity. As to expression, the alpha/alpha homodimer is expressed in embryo and in most adult tissues. The alpha/beta heterodimer and the beta/beta homodimer are found in striated muscle, and the alpha/gamma heterodimer and the gamma/gamma homodimer in neurons.

It localises to the cytoplasm. It is found in the cell membrane. The protein localises to the myofibril. The protein resides in the sarcomere. Its subcellular location is the m line. It localises to the nucleus. It catalyses the reaction (2R)-2-phosphoglycerate = phosphoenolpyruvate + H2O. It functions in the pathway carbohydrate degradation; glycolysis; pyruvate from D-glyceraldehyde 3-phosphate: step 4/5. Its function is as follows. Glycolytic enzyme the catalyzes the conversion of 2-phosphoglycerate to phosphoenolpyruvate. In addition to glycolysis, involved in various processes such as growth control, hypoxia tolerance and allergic responses. May also function in the intravascular and pericellular fibrinolytic system due to its ability to serve as a receptor and activator of plasminogen on the cell surface of several cell-types such as leukocytes and neurons. Stimulates immunoglobulin production. Binds to the myc promoter and acts as a transcriptional repressor. May be a tumor suppressor. This Homo sapiens (Human) protein is Alpha-enolase (ENO1).